The following is a 172-amino-acid chain: Signal peptidase complex catalytic subunit SEC11 (172 aa).

The Cytoplasmic portion of the chain corresponds to Met-1–Gln-15. A helical; Signal-anchor for type II membrane protein transmembrane segment spans residues Leu-16 to Val-36. Over Ala-37–Glu-172 the chain is Lumenal. Catalysis depends on charge relay system residues Ser-50, His-89, and Asp-114. A C-terminal short (CTS) helix region spans residues Gly-158–Ile-169.

Belongs to the peptidase S26B family. In terms of assembly, component of the signal peptidase complex (SPC) composed of a catalytic subunit SEC11 and three accessory subunits SPC1, SPC2 and SPC3. The complex induces a local thinning of the ER membrane which is used to measure the length of the signal peptide (SP) h-region of protein substrates. This ensures the selectivity of the complex towards h-regions shorter than 18-20 amino acids. SPC associates with the translocon complex.

Its subcellular location is the endoplasmic reticulum membrane. It carries out the reaction Cleavage of hydrophobic, N-terminal signal or leader sequences from secreted and periplasmic proteins.. In terms of biological role, catalytic component of the signal peptidase complex (SPC) which catalyzes the cleavage of N-terminal signal sequences from nascent proteins as they are translocated into the lumen of the endoplasmic reticulum. Specifically cleaves N-terminal signal peptides that contain a hydrophobic alpha-helix (h-region) shorter than 18-20 amino acids. This chain is Signal peptidase complex catalytic subunit SEC11 (SEC11), found in Yarrowia lipolytica (strain CLIB 122 / E 150) (Yeast).